A 194-amino-acid polypeptide reads, in one-letter code: MEYCRDLSEKLREVIRKETVKLPIQPIQIISIERHEFKVLLNKKGIKIVNPPNLTKNLGVYLILSFRLKEKIREILGEKFEHLIKVLGDIISDNTLETPLITLGEGKNLKKKFNEEFIETLENASYSNEEAGKLREFLKTLYALALCNSREEITLDLCVILLHSEQHATLEKQLLSLVQPLLKIDKKPKKELNL.

This is an uncharacterized protein from Aquifex aeolicus (strain VF5).